We begin with the raw amino-acid sequence, 548 residues long: LDL receptor repeat-containing protein egg-2 (548 aa).

At methionine 1–alanine 49 the chain is on the cytoplasmic side. The chain crosses the membrane as a helical; Signal-anchor for type II membrane protein span at residues isoleucine 50–phenylalanine 70. The Extracellular segment spans residues leucine 71–proline 548. A glycan (N-linked (GlcNAc...) asparagine) is linked at asparagine 119. 8 consecutive LDL-receptor class A domains span residues threonine 122–lysine 160, glutamate 161–arginine 213, lysine 215–asparagine 252, lysine 253–aspartate 288, threonine 291–proline 328, lysine 370–threonine 412, glutamate 416–aspartate 454, and lysine 455–serine 492. 23 disulfides stabilise this stretch: cysteine 130–cysteine 150, cysteine 144–cysteine 159, cysteine 162–cysteine 190, cysteine 168–cysteine 203, cysteine 197–cysteine 212, cysteine 216–cysteine 229, cysteine 223–cysteine 242, cysteine 236–cysteine 251, cysteine 254–cysteine 265, cysteine 261–cysteine 278, cysteine 272–cysteine 287, cysteine 292–cysteine 305, cysteine 300–cysteine 318, cysteine 312–cysteine 327, cysteine 371–cysteine 389, cysteine 379–cysteine 402, cysteine 396–cysteine 411, cysteine 417–cysteine 431, cysteine 427–cysteine 444, cysteine 438–cysteine 453, cysteine 456–cysteine 469, cysteine 463–cysteine 482, and cysteine 476–cysteine 491. Asparagine 244 carries N-linked (GlcNAc...) asparagine glycosylation. The N-linked (GlcNAc...) asparagine glycan is linked to asparagine 527.

The protein localises to the cell membrane. Its subcellular location is the endosome membrane. Functionally, probable receptor which is required for the oocyte-to-zygote transition although its exact function is controversial. Redundantly with egg-1, seems to be required for fertilization probably by promoting the interaction or fusion between sperm and oocyte. Conversely, shown to be dispensable for fertilization but required together with egg-1 for the formation of a continuous and cohesive eggshell chitin layer by maintaining a homogenous distribution of chitin synthase chs-1 at the unfertilized oocyte cell membrane. Appears to recruit or maintain together to the unfertilized oocyte cortex several proteins including chs-1, kinase mbk-2 and pseudophosphatase egg-3, and possibly egg-4 and egg-5. The polypeptide is LDL receptor repeat-containing protein egg-2 (Caenorhabditis elegans).